Reading from the N-terminus, the 982-residue chain is Probable beta-galactosidase C (982 aa).

The first 21 residues, 1–21 (MRLFALLPVLLGLISSHFVSA), serve as a signal peptide directing secretion. Substrate-binding residues include Y80, N125, A126, E127, and N185. Catalysis depends on E186, which acts as the Proton donor. Position 249 (Y249) interacts with substrate. A disulfide bond links C255 and C302. An N-linked (GlcNAc...) asparagine glycan is attached at N274. E285 serves as the catalytic Nucleophile. Residue Y351 coordinates substrate. N389, N434, N600, N675, N718, and N785 each carry an N-linked (GlcNAc...) asparagine glycan.

The protein belongs to the glycosyl hydrolase 35 family.

Its subcellular location is the secreted. The catalysed reaction is Hydrolysis of terminal non-reducing beta-D-galactose residues in beta-D-galactosides.. Its function is as follows. Cleaves beta-linked terminal galactosyl residues from gangliosides, glycoproteins, and glycosaminoglycans. The polypeptide is Probable beta-galactosidase C (lacC) (Penicillium rubens (strain ATCC 28089 / DSM 1075 / NRRL 1951 / Wisconsin 54-1255) (Penicillium chrysogenum)).